The primary structure comprises 241 residues: Methylthioribulose-1-phosphate dehydratase (241 aa).

Cysteine 100 contributes to the substrate binding site. Zn(2+) is bound by residues histidine 117 and histidine 119. The active-site Proton donor/acceptor is glutamate 146. A Zn(2+)-binding site is contributed by histidine 202.

The protein belongs to the aldolase class II family. MtnB subfamily. Requires Zn(2+) as cofactor.

The protein localises to the cytoplasm. It catalyses the reaction 5-(methylsulfanyl)-D-ribulose 1-phosphate = 5-methylsulfanyl-2,3-dioxopentyl phosphate + H2O. It participates in amino-acid biosynthesis; L-methionine biosynthesis via salvage pathway; L-methionine from S-methyl-5-thio-alpha-D-ribose 1-phosphate: step 2/6. In terms of biological role, catalyzes the dehydration of methylthioribulose-1-phosphate (MTRu-1-P) into 2,3-diketo-5-methylthiopentyl-1-phosphate (DK-MTP-1-P). This is Methylthioribulose-1-phosphate dehydratase from Ajellomyces dermatitidis (strain ER-3 / ATCC MYA-2586) (Blastomyces dermatitidis).